A 444-amino-acid chain; its full sequence is Tryptophan 5-hydroxylase 1 (444 aa).

Residues 19 to 94 form the ACT domain; it reads SLIFSLKNEV…NVLSVNLPDN (76 aa). S58 is modified (phosphoserine; by PKA). Y235, R257, and T265 together coordinate L-tryptophan. H272, H277, and E317 together coordinate Fe cation. S336 and I366 together coordinate L-tryptophan.

This sequence belongs to the biopterin-dependent aromatic amino acid hydroxylase family. Homotetramer. Interacts with DNAJC12. The cofactor is Fe(2+). In terms of processing, ubiquitinated, leading to its degradation by the proteasome. Ubiquitinated is triggered by phosphorylation. Post-translationally, phosphorylated; triggering degradation by the proteasome. Seems to be less widely expressed than isoform 1.

The enzyme catalyses (6R)-L-erythro-5,6,7,8-tetrahydrobiopterin + L-tryptophan + O2 = 5-hydroxy-L-tryptophan + (4aS,6R)-4a-hydroxy-L-erythro-5,6,7,8-tetrahydrobiopterin. Its pathway is aromatic compound metabolism; serotonin biosynthesis; serotonin from L-tryptophan: step 1/2. Functionally, oxidizes L-tryptophan to 5-hydroxy-l-tryptophan in the rate-determining step of serotonin biosynthesis. The protein is Tryptophan 5-hydroxylase 1 (TPH1) of Homo sapiens (Human).